Reading from the N-terminus, the 285-residue chain is RNA polymerase sigma factor RpoH (285 aa).

The interval 53–122 (LILSHLRFVV…IHEYVLRNWR (70 aa)) is sigma-70 factor domain-2. Residues 77–80 (DLIQ) carry the Interaction with polymerase core subunit RpoC motif. The tract at residues 229 to 281 (AMEGLDERSQDIIRARWLDEDNKSTLQELADRYGVSAERVRQLEKNAMKKLRA) is sigma-70 factor domain-4. A DNA-binding region (H-T-H motif) is located at residues 254-273 (LQELADRYGVSAERVRQLEK).

Belongs to the sigma-70 factor family. RpoH subfamily. As to quaternary structure, interacts with the RNA polymerase core enzyme.

Its subcellular location is the cytoplasm. Functionally, sigma factors are initiation factors that promote the attachment of RNA polymerase to specific initiation sites and are then released. This sigma factor is involved in regulation of expression of heat shock genes. This is RNA polymerase sigma factor RpoH from Enterobacter cloacae.